A 2531-amino-acid chain; its full sequence is Highly reducing polyketide synthase ausV (2531 aa).

Residues 7–432 (STPIAIIGLS…GTNAHCVMET (426 aa)) form the Ketosynthase family 3 (KS3) domain. Active-site for beta-ketoacyl synthase activity residues include Cys-180, His-315, and His-355. Residues 554-882 (FVFTGQGAQW…HHTLLESMGS (329 aa)) are malonyl-CoA:ACP transacylase (MAT) domain. Ser-644 (for malonyltransferase activity) is an active-site residue. The N-terminal hotdog fold stretch occupies residues 939 to 1069 (HDLCGIRVED…GSVLAGTPSD (131 aa)). The PKS/mFAS DH domain maps to 939 to 1238 (HDLCGIRVED…LATLSVRSGD (300 aa)). Residues 940–1236 (DLCGIRVEDD…LELATLSVRS (297 aa)) are dehydratase (DH) domain. The Proton acceptor; for dehydratase activity role is filled by His-971. The interval 1087 to 1238 (YVETTPRQAY…LATLSVRSGD (152 aa)) is C-terminal hotdog fold. Asp-1152 (proton donor; for dehydratase activity) is an active-site residue. The tract at residues 1414–1592 (SSYLRLHARN…DTGFSGVDIS (179 aa)) is methyltransferase (CMet) domain. Residues 1832 to 2133 (LRFVQDPAYW…SGGAKPGCSR (302 aa)) form an enoyl reductase (ER) domain region. Residues 2156-2331 (HGRALVPDFH…AGVSLSLGFI (176 aa)) are ketoreductase (KR) domain. Positions 2444-2521 (AAATAVLDAL…ELARDLALRS (78 aa)) constitute a Carrier domain. Ser-2481 carries the post-translational modification O-(pantetheine 4'-phosphoryl)serine.

The protein operates within secondary metabolite biosynthesis; terpenoid biosynthesis. Functionally, highly reducing polyketide synthase; part of the gene cluster that mediates the biosynthesis of calidodehydroaustin, a fungal meroterpenoid. The first step of the pathway is the synthesis of 3,5-dimethylorsellinic acid by the polyketide synthase ausA. 3,5-dimethylorsellinic acid is then prenylated by the polyprenyl transferase ausN. Further epoxidation by the FAD-dependent monooxygenase ausM and cyclization by the probable terpene cyclase ausL lead to the formation of protoaustinoid A. Protoaustinoid A is then oxidized to spiro-lactone preaustinoid A3 by the combined action of the FAD-binding monooxygenases ausB and ausC, and the dioxygenase ausE. Acid-catalyzed keto-rearrangement and ring contraction of the tetraketide portion of preaustinoid A3 by ausJ lead to the formation of preaustinoid A4. The aldo-keto reductase ausK, with the help of ausH, is involved in the next step by transforming preaustinoid A4 into isoaustinone which is in turn hydroxylated by the P450 monooxygenase ausI to form austinolide. The cytochrome P450 monooxygenase ausG modifies austinolide to austinol. Austinol is further acetylated to austin by the O-acetyltransferase ausP, which spontaneously changes to dehydroaustin. The cytochrome P450 monooxygenase ausR then converts dehydroaustin is into 7-dehydrodehydroaustin. The hydroxylation catalyzed by ausR permits the O-acetyltransferase ausQ to add an additional acetyl group to the molecule, leading to the formation of acetoxydehydroaustin. The short chain dehydrogenase ausT catalyzes the reduction of the double bond present between carbon atoms 1 and 2 to convert 7-dehydrodehydroaustin into 1,2-dihydro-7-hydroxydehydroaustin. AusQ catalyzes not only an acetylation reaction but also the addition of the PKS ausV diketide product to 1,2-dihydro-7-hydroxydehydroaustin, forming precalidodehydroaustin. Finally, the iron/alpha-ketoglutarate-dependent dioxygenase converts precalidodehydroaustin into calidodehydroaustin. This Aspergillus calidoustus protein is Highly reducing polyketide synthase ausV.